A 321-amino-acid polypeptide reads, in one-letter code: Phosphatidate cytidylyltransferase, mitochondrial (321 aa).

The protein belongs to the TAM41 family. Mg(2+) is required as a cofactor. Requires Co(2+) as cofactor. The cofactor is Cu(2+).

The protein resides in the mitochondrion inner membrane. It carries out the reaction a 1,2-diacyl-sn-glycero-3-phosphate + CTP + H(+) = a CDP-1,2-diacyl-sn-glycerol + diphosphate. The protein operates within phospholipid metabolism; CDP-diacylglycerol biosynthesis; CDP-diacylglycerol from sn-glycerol 3-phosphate: step 3/3. Its function is as follows. Catalyzes the formation of CDP-diacylglycerol (CDP-DAG) from phosphatidic acid (PA) in the mitochondrial inner membrane. Required for the biosynthesis of the dimeric phospholipid cardiolipin, which stabilizes supercomplexes of the mitochondrial respiratory chain in the mitochondrial inner membrane. In Caenorhabditis elegans, this protein is Phosphatidate cytidylyltransferase, mitochondrial.